A 466-amino-acid polypeptide reads, in one-letter code: Phage-like element PBSX protein XkdK (466 aa).

This sequence belongs to the myoviridae tail sheath protein family.

The chain is Phage-like element PBSX protein XkdK (xkdK) from Bacillus subtilis (strain 168).